The chain runs to 273 residues: Putative phosphoenolpyruvate synthase regulatory protein (273 aa).

153–160 (GVSRCGKT) contributes to the ADP binding site.

It belongs to the pyruvate, phosphate/water dikinase regulatory protein family. PSRP subfamily.

It carries out the reaction [pyruvate, water dikinase] + ADP = [pyruvate, water dikinase]-phosphate + AMP + H(+). It catalyses the reaction [pyruvate, water dikinase]-phosphate + phosphate + H(+) = [pyruvate, water dikinase] + diphosphate. Functionally, bifunctional serine/threonine kinase and phosphorylase involved in the regulation of the phosphoenolpyruvate synthase (PEPS) by catalyzing its phosphorylation/dephosphorylation. This is Putative phosphoenolpyruvate synthase regulatory protein from Pectobacterium atrosepticum (strain SCRI 1043 / ATCC BAA-672) (Erwinia carotovora subsp. atroseptica).